A 433-amino-acid polypeptide reads, in one-letter code: MNRDTSPDLHYLSGFGNEFASEALPGALPVGQNSPQKAPYGLYAELLSGTAFTMARSELRRTWLYRIRPSALHPRFERLARQPLGGPLGGINPNRLRWSPQPIPAEPTDFIEGWLPMAANAGAEKPAGVSIYIYRANRSMERVFFNADGELLLVPEQGRLRIATELGVMEVEPLEIAVIPRGMKFRVELLDGQARGYIAENHGAPLRLPDLGPIGSNGLANPRDFLTPVAHYEEAEGPVQLVQKFLGEHWACELQHSPLDVVAWHGSNVPYKYDLRRFNTIGTVSFDHPDPSIFTVLTSPTSVHGMANMDFVIFPPRWMVAENTFRPPWFHRNLMNEFMGLINGAYDAKAEGFLPGGASLHGVMSAHGPDAETCEKAIAADLAPHKIDNTMAFMFETSQVLRPSLQALECPQLQADYDSCWATLPSTFNPNRR.

His-288 functions as the Proton acceptor in the catalytic mechanism. Residues His-331 and Glu-337 each contribute to the Fe cation site. Homogentisate is bound by residues Tyr-346 and His-367. His-367 provides a ligand contact to Fe cation.

The protein belongs to the homogentisate dioxygenase family. As to quaternary structure, hexamer; dimer of trimers. Requires Fe cation as cofactor.

It catalyses the reaction homogentisate + O2 = 4-maleylacetoacetate + H(+). It participates in amino-acid degradation; L-phenylalanine degradation; acetoacetate and fumarate from L-phenylalanine: step 4/6. In terms of biological role, involved in the catabolism of homogentisate (2,5-dihydroxyphenylacetate or 2,5-OH-PhAc), a central intermediate in the degradation of phenylalanine and tyrosine. Catalyzes the oxidative ring cleavage of the ar omatic ring of 2,5-dihydroxyphenylacetate to yield maleylacetoacetate. In Pseudomonas putida (strain ATCC 47054 / DSM 6125 / CFBP 8728 / NCIMB 11950 / KT2440), this protein is Homogentisate 1,2-dioxygenase.